The sequence spans 126 residues: Prefoldin subunit beta (126 aa).

Belongs to the prefoldin subunit beta family. In terms of assembly, heterohexamer of two alpha and four beta subunits.

It is found in the cytoplasm. Molecular chaperone capable of stabilizing a range of proteins. Seems to fulfill an ATP-independent, HSP70-like function in archaeal de novo protein folding. The protein is Prefoldin subunit beta of Saccharolobus islandicus (strain Y.N.15.51 / Yellowstone #2) (Sulfolobus islandicus).